The following is a 543-amino-acid chain: Thiamine transport system permease protein ThiP (543 aa).

Helical transmembrane passes span 19-39 (VAGG…LLAL), 64-84 (FTIW…IPIA), 102-122 (LFAL…TSIY), 142-162 (DIYG…PLAV), 205-225 (GMIG…LTLG), 250-270 (AVAL…ILRL), 300-320 (IIVI…VVVS), 343-363 (LALG…LVAA), 379-399 (GASL…FILL), 406-426 (FVMA…PFAV), 468-488 (GMAF…IALF), and 510-530 (FDAA…MMIA). Positions 62-266 (ARFTIWQAVA…QLALTLLILL (205 aa)) constitute an ABC transmembrane type-1 1 domain. The region spanning 339–530 (IATSLALGFS…VLCLALMMIA (192 aa)) is the ABC transmembrane type-1 2 domain.

This sequence belongs to the binding-protein-dependent transport system permease family. CysTW subfamily. As to quaternary structure, the complex is composed of two ATP-binding proteins (ThiQ), two transmembrane proteins (ThiP) and a solute-binding protein (ThiB).

The protein resides in the cell inner membrane. Functionally, part of the ABC transporter complex ThiBPQ involved in thiamine import. Probably responsible for the translocation of the substrate across the membrane. The sequence is that of Thiamine transport system permease protein ThiP (thiP) from Brucella suis biovar 1 (strain 1330).